Here is a 263-residue protein sequence, read N- to C-terminus: Type-2Bb cytolytic delta-endotoxin (263 aa).

Belongs to the cyt1/cyt2 endotoxin family. Active after proteolytic processing.

Its function is as follows. Kills the larvae of dipteran insects by making pores in the epithelial cell membrane of the insect midgut. The chain is Type-2Bb cytolytic delta-endotoxin (cyt2Bb1) from Bacillus thuringiensis subsp. jegathesan.